The primary structure comprises 159 residues: Cyclin-dependent kinase inhibitor 1 (159 aa).

Residue serine 2 is modified to N-acetylserine. Serine 2 participates in a covalent cross-link: Glycyl serine ester (Ser-Gly) (interchain with G-Cter in ubiquitin). The segment at 12–40 (HRSKVCRCLFGPVDSEQLRRDCDALMAGC) adopts a C4-type zinc-finger fold. The tract at residues 17–24 (CRCLFGPV) is required for binding cyclins. Positions 53–58 (VTETPL) are required for binding CDKs. Serine 78 is modified (phosphoserine; by NUAK1). Residues 78–106 (SPGSRSRDDLGGDKRPSTSSALLQGPAPE) are disordered. A compositionally biased stretch (basic and acidic residues) spans 82–93 (RSRDDLGGDKRP). Phosphoserine; by GSK3-beta is present on serine 112. Residues 118 to 142 (VSERPEDSPGGPGTSQGRKRRQTSL) form a disordered region. Serine 125 carries the post-translational modification Phosphoserine. The PIP-box K+4 motif motif lies at 135 to 159 (RKRRQTSLTDFYHSKRRLVFCKRKP). The residue at position 140 (threonine 140) is a Phosphothreonine; by PKA, PKB/AKT1, PIM1 and PIM2. Serine 141 bears the Phosphoserine; by NUAK1 mark. The interval 147 to 159 (HSKRRLVFCKRKP) is interaction with TRIM39.

This sequence belongs to the CDI family. Interacts with HDAC1; the interaction is prevented by competitive binding of C10orf90/FATS to HDAC1 facilitating acetylation and protein stabilization of CDKN1A/p21. Interacts with MKRN1. Interacts with PSMA3. Interacts with PCNA. Component of the ternary complex, cyclin D-CDK4-CDKN1A. Interacts (via its N-terminal domain) with CDK4; the interaction promotes the assembly of the cyclin D-CDK4 complex, its nuclear translocation and promotes the cyclin D-dependent enzyme activity of CDK4. Binding to CDK2 leads to CDK2/cyclin E inactivation at the G1-S phase DNA damage checkpoint, thereby arresting cells at the G1-S transition during DNA repair. Interacts with PIM1. Interacts with STK11. Interacts with NUAK1. Interacts with DTL and TRIM39. Interacts with PKP3; the interaction sequesters CDKN1A to the cytoplasm thereby repressing its role as an inhibitor of CDK4- and CDK6-driven RB1 phosphorylation. In terms of processing, phosphorylation of Thr-140 or Ser-141 impairs binding to PCNA. Phosphorylation at Ser-112 by GSK3-beta enhances ubiquitination by the DCX(DTL) complex. Phosphorylation of Thr-140 by PIM2 enhances its stability and inhibits cell proliferation. Phosphorylation of Thr-140 by PIM1 results in the relocation of CDKN1A to the cytoplasm and enhanced CDKN1A protein stability. UV radiation-induced phosphorylation at Ser-78 and Ser-141 by NUAK1 leads to its degradation. Ubiquitinated by MKRN1; leading to polyubiquitination and 26S proteasome-dependent degradation. Ubiquitinated by the DCX(DTL) complex, also named CRL4(CDT2) complex, leading to its degradation during S phase or following UV irradiation. Ubiquitination by the DCX(DTL) complex is essential to control replication licensing and is PCNA-dependent: interacts with PCNA via its PIP-box, while the presence of the containing the 'K+4' motif in the PIP box, recruit the DCX(DTL) complex, leading to its degradation. Ubiquitination at Ser-2 leads to degradation by the proteasome pathway. Ubiquitinated by RNF114; leading to proteasomal degradation. Post-translationally, acetylation leads to protein stability. Acetylated in vitro on Lys-136, Lys-149, Lys-156 and Lys-158. Deacetylation by HDAC1 is prevented by competitive binding of C10orf90/FATS to HDAC1. In terms of tissue distribution, expressed in keratinocytes (at protein level).

It localises to the cytoplasm. The protein localises to the nucleus. In terms of biological role, may be involved in p53/TP53 mediated inhibition of cellular proliferation in response to DNA damage. Binds to and inhibits cyclin-dependent kinase activity, preventing phosphorylation of critical cyclin-dependent kinase substrates and blocking cell cycle progression. Functions in the nuclear localization and assembly of cyclin D-CDK4 complex and promotes its kinase activity towards RB1. At higher stoichiometric ratios, inhibits the kinase activity of the cyclin D-CDK4 complex. Inhibits DNA synthesis by DNA polymerase delta by competing with POLD3 for PCNA binding. Plays an important role in controlling cell cycle progression and DNA damage-induced G2 arrest. Functionally, plays an important role in controlling cell cycle progression and DNA damage-induced G2 arrest. Involved in p53/TP53 mediated inhibition of cellular proliferation in response to DNA damage. Also involved in p53-independent DNA damage-induced G2 arrest mediated by CREB3L1 in astrocytes and osteoblasts. Binds to and inhibits cyclin-dependent kinase activity, preventing phosphorylation of critical cyclin-dependent kinase substrates and blocking cell cycle progression. Functions in the nuclear localization and assembly of cyclin D-CDK4 complex and promotes its kinase activity towards RB1. At higher stoichiometric ratios, inhibits the kinase activity of the cyclin D-CDK4 complex. Inhibits DNA synthesis by DNA polymerase delta by competing with POLD3 for PCNA binding. Negatively regulates the CDK4- and CDK6-driven phosphorylation of RB1 in keratinocytes, thereby resulting in the release of E2F1 and subsequent transcription of E2F1-driven G1/S phase promoting genes. In Mus musculus (Mouse), this protein is Cyclin-dependent kinase inhibitor 1 (Cdkn1a).